Consider the following 912-residue polypeptide: Tiger protein E1 (912 aa).

Positions 1–22 (MKLKHLTIFLFIFIYRFLFVKS) are cleaved as a signal peptide. The Extracellular portion of the chain corresponds to 23–815 (DCYLINNERP…YSENKSSGFP (793 aa)). N-linked (GlcNAc...) asparagine glycosylation is found at N54, N108, N164, N183, N232, N268, N323, N356, N398, N407, N568, N637, N653, N658, N706, N716, N763, N774, N781, and N809. IPT/TIG domains are found at residues 532–609 (SSDQ…GPFT) and 612–686 (PVIE…PLII). The 82-residue stretch at 715-796 (TNTSDIDQTA…DGQYFIAQIF (82 aa)) folds into the IPT/TIG 3 domain. The chain crosses the membrane as a helical span at residues 816 to 836 (NEMYIGIVAIIIFLALIFFAI). The Cytoplasmic segment spans residues 837 to 912 (KTQVEKYIEE…IRCCFKEHTD (76 aa)).

It localises to the cell membrane. This chain is Tiger protein E1 (tgrE1), found in Dictyostelium discoideum (Social amoeba).